The following is a 179-amino-acid chain: Large ribosomal subunit protein uL5 (179 aa).

This sequence belongs to the universal ribosomal protein uL5 family. In terms of assembly, part of the 50S ribosomal subunit; part of the 5S rRNA/L5/L18/L25 subcomplex. Contacts the 5S rRNA and the P site tRNA. Forms a bridge to the 30S subunit in the 70S ribosome.

This is one of the proteins that bind and probably mediate the attachment of the 5S RNA into the large ribosomal subunit, where it forms part of the central protuberance. In the 70S ribosome it contacts protein S13 of the 30S subunit (bridge B1b), connecting the 2 subunits; this bridge is implicated in subunit movement. Contacts the P site tRNA; the 5S rRNA and some of its associated proteins might help stabilize positioning of ribosome-bound tRNAs. In Geobacter sp. (strain M21), this protein is Large ribosomal subunit protein uL5.